The chain runs to 58 residues: Probable mRNA interferase HicA 2 (58 aa).

The protein belongs to the HicA mRNA interferase family. As to quaternary structure, probably forms a complex with the cognate antitoxin HicB 2 which inhibits the mRNA interferase activity.

Functionally, toxic component of a type II toxin-antitoxin (TA) system. A probable translation-independent mRNA interferase. The protein is Probable mRNA interferase HicA 2 (hicA2) of Photorhabdus laumondii subsp. laumondii (strain DSM 15139 / CIP 105565 / TT01) (Photorhabdus luminescens subsp. laumondii).